A 348-amino-acid chain; its full sequence is Ephrin-4 (348 aa).

A signal peptide spans 1-20 (MKQFFEFLITTFLLLGLAAA). Positions 21–178 (DEHIVYWNST…SQNMRLSMKV (158 aa)) constitute an Ephrin RBD domain. The N-linked (GlcNAc...) asparagine glycan is linked to asparagine 28. Cystine bridges form between cysteine 53/cysteine 91 and cysteine 79/cysteine 167. N-linked (GlcNAc...) asparagine glycosylation is present at asparagine 157. Residues 207 to 237 (GGQEDEDSDNDNAHLLPRDLEGSTNPKFRRP) are disordered. Residue serine 329 is the site of GPI-anchor amidated serine attachment. The propeptide at 330–348 (STSLSTNFAILLAVIYVLY) is removed in mature form.

Belongs to the ephrin family. As to quaternary structure, interacts with lat-2. Post-translationally, may undergo proteolysis by metalloprotease sup-17 to give rise to a soluble form.

It localises to the cell membrane. Regulates the formation or stabilization of cell-cell contacts at several stages of epithelial morphogenesis. In early embryonic development, involved in ventral closure of the epidermis. During male tail morphogenesis, regulates precursor cell sorting together with mab-20 and allows the formation of distinct sensory rays. Probably acts as a ligand for lad-2 to regulate axon guidance of several neurons including SDQL, SDQR, SMD and PLN neurons during neurogenesis. In Caenorhabditis elegans, this protein is Ephrin-4 (efn-4).